A 330-amino-acid chain; its full sequence is tRNA U34 carboxymethyltransferase (330 aa).

Carboxy-S-adenosyl-L-methionine contacts are provided by residues Lys91, Trp105, Lys110, Gly130, 152–154, 181–182, Met196, Tyr200, and Arg315; these read DPS and IE.

The protein belongs to the class I-like SAM-binding methyltransferase superfamily. CmoB family. Homotetramer.

It carries out the reaction carboxy-S-adenosyl-L-methionine + 5-hydroxyuridine(34) in tRNA = 5-carboxymethoxyuridine(34) in tRNA + S-adenosyl-L-homocysteine + H(+). In terms of biological role, catalyzes carboxymethyl transfer from carboxy-S-adenosyl-L-methionine (Cx-SAM) to 5-hydroxyuridine (ho5U) to form 5-carboxymethoxyuridine (cmo5U) at position 34 in tRNAs. This Shewanella loihica (strain ATCC BAA-1088 / PV-4) protein is tRNA U34 carboxymethyltransferase.